Here is a 375-residue protein sequence, read N- to C-terminus: Chaperone protein DnaJ (375 aa).

Residues 5-70 (DFYETLGVAK…QKRAAYDRYG (66 aa)) enclose the J domain. The CR-type zinc-finger motif lies at 136-214 (GKTAQIRVPT…CHGQGRVTEE (79 aa)). Cys-149, Cys-152, Cys-166, Cys-169, Cys-188, Cys-191, Cys-202, and Cys-205 together coordinate Zn(2+). CXXCXGXG motif repeat units lie at residues 149–156 (CDVCSGSG), 166–173 (CGTCQGSG), 188–195 (CPTCHGRG), and 202–209 (CPKCHGQG).

Belongs to the DnaJ family. In terms of assembly, homodimer. The cofactor is Zn(2+).

The protein resides in the cytoplasm. Its function is as follows. Participates actively in the response to hyperosmotic and heat shock by preventing the aggregation of stress-denatured proteins and by disaggregating proteins, also in an autonomous, DnaK-independent fashion. Unfolded proteins bind initially to DnaJ; upon interaction with the DnaJ-bound protein, DnaK hydrolyzes its bound ATP, resulting in the formation of a stable complex. GrpE releases ADP from DnaK; ATP binding to DnaK triggers the release of the substrate protein, thus completing the reaction cycle. Several rounds of ATP-dependent interactions between DnaJ, DnaK and GrpE are required for fully efficient folding. Also involved, together with DnaK and GrpE, in the DNA replication of plasmids through activation of initiation proteins. The chain is Chaperone protein DnaJ from Rhizobium etli (strain CIAT 652).